Reading from the N-terminus, the 208-residue chain is Uracil phosphoribosyltransferase (208 aa).

5-phospho-alpha-D-ribose 1-diphosphate contacts are provided by residues Arg-78, Arg-103, and 130 to 138 (DPMLATGGS). Uracil contacts are provided by residues Ile-193 and 198-200 (GDA). Asp-199 lines the 5-phospho-alpha-D-ribose 1-diphosphate pocket.

It belongs to the UPRTase family. It depends on Mg(2+) as a cofactor.

The catalysed reaction is UMP + diphosphate = 5-phospho-alpha-D-ribose 1-diphosphate + uracil. Its pathway is pyrimidine metabolism; UMP biosynthesis via salvage pathway; UMP from uracil: step 1/1. Allosterically activated by GTP. Its function is as follows. Catalyzes the conversion of uracil and 5-phospho-alpha-D-ribose 1-diphosphate (PRPP) to UMP and diphosphate. This chain is Uracil phosphoribosyltransferase, found in Shewanella sp. (strain ANA-3).